A 422-amino-acid chain; its full sequence is Tryptophan synthase beta chain 2 (422 aa).

K111 bears the N6-(pyridoxal phosphate)lysine mark.

This sequence belongs to the TrpB family. As to quaternary structure, tetramer of two alpha and two beta chains. Requires pyridoxal 5'-phosphate as cofactor.

It catalyses the reaction (1S,2R)-1-C-(indol-3-yl)glycerol 3-phosphate + L-serine = D-glyceraldehyde 3-phosphate + L-tryptophan + H2O. It participates in amino-acid biosynthesis; L-tryptophan biosynthesis; L-tryptophan from chorismate: step 5/5. Its function is as follows. The beta subunit is responsible for the synthesis of L-tryptophan from indole and L-serine. The protein is Tryptophan synthase beta chain 2 (trpB2) of Thermotoga maritima (strain ATCC 43589 / DSM 3109 / JCM 10099 / NBRC 100826 / MSB8).